The chain runs to 145 residues: Ribonuclease H (145 aa).

The 142-residue stretch at 1 to 142 folds into the RNase H type-1 domain; it reads MDTPVYLYTD…ADDLANRGAA (142 aa). The Mg(2+) site is built by D10, E48, D70, and D134.

It belongs to the RNase H family. In terms of assembly, monomer. The cofactor is Mg(2+).

The protein localises to the cytoplasm. The enzyme catalyses Endonucleolytic cleavage to 5'-phosphomonoester.. Its function is as follows. Endonuclease that specifically degrades the RNA of RNA-DNA hybrids. This is Ribonuclease H from Neisseria gonorrhoeae (strain ATCC 700825 / FA 1090).